The primary structure comprises 118 residues: Holin-like protein CidA 2 (118 aa).

The next 4 helical transmembrane spans lie at 5-27, 31-50, 62-84, and 88-110; these read MLLL…QGVF, MPGS…TRIL, LLVF…ESFL, and GSII…GYIS.

Belongs to the CidA/LrgA family. CidA subfamily.

The protein resides in the cell membrane. Its function is as follows. Increases the activity of extracellular murein hydrolases possibly by mediating their export via hole formation. Inhibited by the antiholin-like proteins LrgAB. In an unstressed cell, the LrgAB products probably inhibit the function of the CidA protein. When a cell is stressed by the addition of antibiotics or by other factors in the environment, CidA possibly oligomerizes within the bacterial cell membrane, creating lesions that disrupt the proton motive force, which in turn results in loss of cell viability. These lesions are also hypothesized to regulate the subsequent cell lysis by either allowing the murein hydrolases access to the cell wall substrate and/or regulating their activity by a possible change in the cell wall pH that results from loss of membrane potential. In Bacillus anthracis, this protein is Holin-like protein CidA 2 (cidA2).